The sequence spans 1381 residues: DNA-directed RNA polymerase subunit beta'' (1381 aa).

The Zn(2+) site is built by Cys-220, Cys-293, Cys-300, and Cys-303.

The protein belongs to the RNA polymerase beta' chain family. RpoC2 subfamily. In plastids the minimal PEP RNA polymerase catalytic core is composed of four subunits: alpha, beta, beta', and beta''. When a (nuclear-encoded) sigma factor is associated with the core the holoenzyme is formed, which can initiate transcription. The cofactor is Zn(2+).

The protein localises to the plastid. It is found in the chloroplast. It carries out the reaction RNA(n) + a ribonucleoside 5'-triphosphate = RNA(n+1) + diphosphate. In terms of biological role, DNA-dependent RNA polymerase catalyzes the transcription of DNA into RNA using the four ribonucleoside triphosphates as substrates. The chain is DNA-directed RNA polymerase subunit beta'' from Draba nemorosa (Woodland whitlowgrass).